Here is a 751-residue protein sequence, read N- to C-terminus: Proton-associated sugar transporter A (751 aa).

6 helical membrane-spanning segments follow: residues 93-113 (ILFG…PVLL), 123-143 (SLVW…LGAW), 155-175 (RPFI…LLNG), 191-211 (WGIL…DSAD), 233-253 (IHAL…GIHW), and 268-288 (VIYI…LVSI). At T500 the chain carries Phosphothreonine. 6 consecutive transmembrane segments (helical) span residues 536 to 556 (GWLS…EVVF), 576 to 596 (VTMG…YSAI), 606 to 626 (VRTL…LATL), 630 to 650 (LYVV…LCTL), 688 to 708 (FLAQ…VGSA), and 710 to 730 (GVMY…SLCV).

This sequence belongs to the glycoside-pentoside-hexuronide (GPH) cation symporter transporter (TC 2.A.2) family. As to expression, predominantly expressed in brain.

Its subcellular location is the membrane. It catalyses the reaction D-galactose(in) + H(+)(in) = D-galactose(out) + H(+)(out). The catalysed reaction is D-glucose(out) + H(+)(out) = D-glucose(in) + H(+)(in). Its function is as follows. Proton-associated glucose transporter in the brain. In Rattus norvegicus (Rat), this protein is Proton-associated sugar transporter A.